The sequence spans 2242 residues: MNNNNKKGVYILWVHDQQFSKEELVVNPEYFPKLKIMDVLKIYSPSNPSKRLCLRVKQLSPLKTKLQISISKYVAGVFDFALRKEVVVNIIPEKQAIIDFVELSFKDQYIGRSDMWRLKLNLQNECVYVLKKLAFAQIRAQVEEMVSNGQKVSSGLIDDSTKFVFRSRSAKFVLFIQMSKEMWDYSPDGELYFEKAVNGFLKNLFQRWKSLSVNHTITIILFSRTFHENDDILDEIPNIPRNPQGKLYQDFYKVVVNEETRPDWSSIIVNLKREFNDYHTSVNWDIYGRNSALGKNSTASQGNFLEAINLGMSYFDKHYIDRDFTRTGQMIVVISAGTGIFEVDPDINLITKQRMIDNGIGCDLICLNNHPLHVVPLFKFTISNQNKSQNTIQNNNNNNNNNNNNNNNNNNNNNNNNNNNNNNNNNNNNNSNNNKNNQNNGKAISNIGRNNNNSNSGSSGNSNNSSGGQLYNFPYWLAISFYDENNTTTTTTDVTTNDKRNGLFVPQFKIPEKVNSFYYEDDEKPVYDFYIPKDPRNLPAFATPKINHKYTSNSLGVNSYEDTIFNMPNGGGILDDSNALGGNNNNNYNNNNGNGNGHNHNNHNNNNNNNNNNDHGGHSDTEPSDFSDTEDNSSTTPNSQYSRVAIGLNDKKRATFQIGGTRSSSSFENQRTIINSTTSNNNNNNSNNVVNKRYTSTQHQPILRNGGTINNNNNNQQNHPISPSNSFDQKTIPYHNQLLSTIPPQLFGKKKKEINPFTYDSTPFHLTSNRRRWSHLWFSPNTYIFGKTNTNPNPFLPNWKSLCEPASLPITTDYFPSTKDLKAKYREYVHNLTLPDDNEYTNSFEALLKELISQRLAQGYQLIMITNSEIDPTTTTTTGGTTTPATTTPATTTPATTATSTTPTTIITPTTNPSTATSAIATPSMATPSSSTTTTTTTANLSTSPPNSSNTVPNSGGSGKGTKKSYQLSLGHDFHSITYDPSNLSIQVKRYQRYNGRNSSGSKKLRYHYFLNTIHLQGFLHNSIELQHTASSEYPWNSLDNLICGQLAMSGFGPRIKYWRVLYAIIPTVENNQHQQQLQLEQQEKEKEKARLAALEKKKPFPREDSFSTLILPTNSSSSSSSSSSLPSTVSTTNTNTNNNNNNNNNNNNNNINTTVPTNVPTTTTTDDSTVKNTSTTTATTATEDHGLNTAFNSSSIPIPSKLASPLQSPNLSPKASSVSTSMAALSSSTLVSSNANTTTTNNPVLTTTTTTTTTTAVLNSNGTPLVNSNSSSNSNFAQNSISMLNGSQQQQQLIGSQSAPTSPLTPHKNINTNNNNNNNTTTNTTNNNNSVMNGSAGIINSSSGLNGIKSPPLPILPSSNSLLSSNVSPSNNITPLNSITNSSELLPSSSGASSSSSNTLSSSNSGENNALPEHTEEERLIAFNKFKEFINSQINRNQLAANSNAQSSLLNSSTNNANSNNSSNSTNTSGTVIQQKLDIKTILFSSIETFDPSTIVSNEKSNNNTYTNNNNNNNSINSLNYNSVPSQEQIDLFKEKLYSSNLSGIFYRLNMPYPIGIKMTERKYGIRRTSYKKCFIGAECIDWMLQNIEITKREEALIICQKMMDQKLIKQVEKSTFVDGQFYYRLKEDDLFISSPIIKTINNTNNNFNNNNTNSNNNQQQQQQQQSIPSVTSSAVNSPNKDSNTPDHSPISSPKQIGNKLSSSSNNTPSTFLNSSTNNTNQSTNTTSSSSSTTNINTTLNTNNTLSSSTPPITSIQSSMSNSTKSVVPISSLSSLINNPSLRQSNTDYLTNKEKDKEKEIDEANGDNNNNNNNNNNNNNNNNNNNNNNNNNNNSSNNGENDSSSNSGQGSLNSTLSSIPPATTPNTNPLHFSGGISYGSSVQNSNQHQQQQPQQPQQQQQQQQQQQQQPNNLIDYYENPNKISEAKIEMDLSKTDRFEWILMKYDKTFCPTRYFHVEFNWIVSTGCVVDDFINSCVRKAKQFGLTLIQIPMEKNYSPFSLPTHVHLDQQLMSPQVLKHIFTKFGLIPDTIRKRASSLVTRQDLYIFNDSDVQYSEYVHRTGLLFVRVVEDGFLCYINNAPSNRPFLPAATMCLESFQNLCNQLNNSLSFIGNGSLNSNNNYNNNNNNNNNNNGGGNGNPNLLKPIDRQEANFLSLLALGYKQNSDTEEKNNESDSDNNHNQDTCDNSDNDTDHLSESHEGSHKNESDKEGRDKNEMWESQSEVVYYSVMSRSPLLGSFNE.

Disordered stretches follow at residues 388–465 (SQNT…SNNS), 576–644 (DSNA…YSRV), 701–730 (PILR…FDQK), 871–965 (DPTT…TKKS), 1077–1194 (QLQL…AFNS), 1287–1336 (GSQQ…MNGS), 1384–1414 (SELL…ALPE), 1446–1471 (AQSS…NTSG), and 1502–1521 (SNNN…NSLN). Residues 392–440 (IQNNNNNNNNNNNNNNNNNNNNNNNNNNNNNNNNNNNNNSNNNKNNQNN) are a coiled coil. Residues 581 to 614 (GGNNNNNYNNNNGNGNGHNHNNHNNNNNNNNNND) are compositionally biased toward low complexity. Acidic residues predominate over residues 622 to 631 (EPSDFSDTED). 2 stretches are compositionally biased toward polar residues: residues 632-642 (NSSTTPNSQYS) and 719-729 (HPISPSNSFDQ). Positions 872-955 (PTTTTTTGGT…PNSSNTVPNS (84 aa)) are enriched in low complexity. Positions 1066 to 1101 (IPTVENNQHQQQLQLEQQEKEKEKARLAALEKKKPF) form a coiled coil. Basic and acidic residues predominate over residues 1082 to 1106 (QQEKEKEKARLAALEKKKPFPREDS). Low complexity-rich tracts occupy residues 1108-1182 (STLI…ATTA) and 1287-1299 (GSQQ…GSQS). Residues 1300 to 1311 (APTSPLTPHKNI) are compositionally biased toward polar residues. Composition is skewed to low complexity over residues 1312–1336 (NTNN…MNGS), 1384–1410 (SELL…GENN), and 1446–1470 (AQSS…TNTS). The region spanning 1556-1629 (IGIKMTERKY…DGQFYYRLKE (74 aa)) is the DEP domain. The span at 1645–1668 (TNNNFNNNNTNSNNNQQQQQQQQS) shows a compositional bias: low complexity. Disordered regions lie at residues 1645–1763 (TNNN…SMSN), 1803–1910 (DEAN…QQQQ), 2122–2145 (NYNN…NLLK), and 2165–2218 (NSDT…KNEM). Polar residues predominate over residues 1669–1702 (IPSVTSSAVNSPNKDSNTPDHSPISSPKQIGNKL). 2 stretches are compositionally biased toward low complexity: residues 1703–1760 (SSSS…IQSS) and 1807–1848 (GDNN…SSNS). Residues 1791 to 1821 (LTNKEKDKEKEIDEANGDNNNNNNNNNNNNN) adopt a coiled-coil conformation. Composition is skewed to polar residues over residues 1849–1871 (GQGS…TNPL) and 1879–1889 (YGSSVQNSNQH). Composition is skewed to low complexity over residues 1890 to 1910 (QQQQ…QQQQ) and 2122 to 2133 (NYNNNNNNNNNN). Composition is skewed to basic and acidic residues over residues 2166-2181 (SDTE…DNNH) and 2192-2218 (DTDH…KNEM).

In the N-terminal section; belongs to the IML1 family.

The chain is DEP domain-containing protein DDB_G0279099 from Dictyostelium discoideum (Social amoeba).